The primary structure comprises 80 residues: uncharacterized protein (80 aa).

This is an uncharacterized protein from Haemophilus influenzae (strain ATCC 51907 / DSM 11121 / KW20 / Rd).